The chain runs to 98 residues: uncharacterized protein (98 aa).

A compositionally biased stretch (basic residues) spans 19–31 (RRMSKRSKNKAKK). A disordered region spans residues 19–47 (RRMSKRSKNKAKKERVPVEDRPPTPMPTS).

It belongs to the lymphocryptovirus BNLF2b family.

This is an uncharacterized protein from Homo sapiens (Human).